The primary structure comprises 342 residues: MKALEKSKPEEGLWMVQAPVPEIGPDDVLIKIKKTGICGTDIHIWNWDEWAAHTVPVPMITGHEFAGEIVELGRDVTGLSIGQRVSGEGHLIGTESRQSRAGKFHLDPGTRGIGVNVQGAFAQYLRLPAFNVVPLPEDIPDEIGAILDPLGNAVHTALSFDLLGEDVLITGAGPIGIMAAAVAKHAGARHVVITDINADRLKLAQHVVPRARTVDVTREDLGDVVHELGLKQGFDVGLEMSGSQAALDQMVEALVMGGKIALLGIPPGKSPVDWSRIVFKAITIKGVYGREMFETWYKMIAMLQNGLDVSRVITHRFGVDEFREGFAAMKSGLSGKVVLDWT.

Cysteine 38 lines the Zn(2+) pocket. Active-site charge relay system residues include threonine 40 and histidine 43. Positions 63 and 64 each coordinate Zn(2+). NAD(+) contacts are provided by residues isoleucine 175, aspartate 195, arginine 200, 263 to 265 (LGI), and 287 to 288 (VY).

Belongs to the zinc-containing alcohol dehydrogenase family. In terms of assembly, homotetramer. It depends on Zn(2+) as a cofactor.

The protein localises to the cytoplasm. It carries out the reaction L-threonine + NAD(+) = (2S)-2-amino-3-oxobutanoate + NADH + H(+). It participates in amino-acid degradation; L-threonine degradation via oxydo-reductase pathway; glycine from L-threonine: step 1/2. In terms of biological role, catalyzes the NAD(+)-dependent oxidation of L-threonine to 2-amino-3-ketobutyrate. This is L-threonine 3-dehydrogenase from Ruegeria pomeroyi (strain ATCC 700808 / DSM 15171 / DSS-3) (Silicibacter pomeroyi).